Reading from the N-terminus, the 114-residue chain is T cell receptor alpha variable 3 (114 aa).

A signal peptide spans 1-20 (MASAPISMLAMLFTLSGLRA). One can recognise an Ig-like domain in the interval 21–114 (QSVAQPEDQV…SALYFCAVRD (94 aa)). Cysteine 42 and cysteine 110 form a disulfide bridge. Asparagine 87 carries N-linked (GlcNAc...) asparagine glycosylation.

Alpha-beta TR is a heterodimer composed of an alpha and beta chain; disulfide-linked. The alpha-beta TR is associated with the transmembrane signaling CD3 coreceptor proteins to form the TR-CD3 (TcR or TCR). The assembly of alpha-beta TR heterodimers with CD3 occurs in the endoplasmic reticulum where a single alpha-beta TR heterodimer associates with one CD3D-CD3E heterodimer, one CD3G-CD3E heterodimer and one CD247 homodimer forming a stable octameric structure. CD3D-CD3E and CD3G-CD3E heterodimers preferentially associate with TR alpha and TR beta chains, respectively. The association of the CD247 homodimer is the last step of TcR assembly in the endoplasmic reticulum and is required for transport to the cell surface.

The protein resides in the cell membrane. Functionally, v region of the variable domain of T cell receptor (TR) alpha chain that participates in the antigen recognition. Alpha-beta T cell receptors are antigen specific receptors which are essential to the immune response and are present on the cell surface of T lymphocytes. Recognize peptide-major histocompatibility (MH) (pMH) complexes that are displayed by antigen presenting cells (APC), a prerequisite for efficient T cell adaptive immunity against pathogens. Binding of alpha-beta TR to pMH complex initiates TR-CD3 clustering on the cell surface and intracellular activation of LCK that phosphorylates the ITAM motifs of CD3G, CD3D, CD3E and CD247 enabling the recruitment of ZAP70. In turn ZAP70 phosphorylates LAT, which recruits numerous signaling molecules to form the LAT signalosome. The LAT signalosome propagates signal branching to three major signaling pathways, the calcium, the mitogen-activated protein kinase (MAPK) kinase and the nuclear factor NF-kappa-B (NF-kB) pathways, leading to the mobilization of transcription factors that are critical for gene expression and essential for T cell growth and differentiation. The T cell repertoire is generated in the thymus, by V-(D)-J rearrangement. This repertoire is then shaped by intrathymic selection events to generate a peripheral T cell pool of self-MH restricted, non-autoaggressive T cells. Post-thymic interaction of alpha-beta TR with the pMH complexes shapes TR structural and functional avidity. This chain is T cell receptor alpha variable 3, found in Homo sapiens (Human).